A 194-amino-acid polypeptide reads, in one-letter code: MRLILLGPPGAGKGTQAGLLTKKHGIPQLSTGDMLRAAVAQQSEIGKRAKAVMDAGQLVSDEIVNQIVSERIDAPDCANGFILDGYPRTVPQAQALGTMLAGKGLKLDAVIELKVDENALVKRMESRVAETIAKGGQVRSDDNPEAFRKRLVEYREKTSPLSSYYAGTGELRVINGMAPVEEVTAEIERILVPA.

10–15 (GAGKGT) lines the ATP pocket. Residues 30–59 (STGDMLRAAVAQQSEIGKRAKAVMDAGQLV) form an NMP region. Residues Thr-31, Arg-36, 57–59 (QLV), 85–88 (GYPR), and Gln-92 contribute to the AMP site. The tract at residues 126–142 (SRVAETIAKGGQVRSDD) is LID. An ATP-binding site is contributed by Arg-127. Positions 139 and 150 each coordinate AMP. Position 178 (Ala-178) interacts with ATP.

The protein belongs to the adenylate kinase family. As to quaternary structure, monomer.

The protein resides in the cytoplasm. The catalysed reaction is AMP + ATP = 2 ADP. The protein operates within purine metabolism; AMP biosynthesis via salvage pathway; AMP from ADP: step 1/1. In terms of biological role, catalyzes the reversible transfer of the terminal phosphate group between ATP and AMP. Plays an important role in cellular energy homeostasis and in adenine nucleotide metabolism. This chain is Adenylate kinase, found in Brucella anthropi (strain ATCC 49188 / DSM 6882 / CCUG 24695 / JCM 21032 / LMG 3331 / NBRC 15819 / NCTC 12168 / Alc 37) (Ochrobactrum anthropi).